The sequence spans 452 residues: Na(+)/H(+) antiporter NhaA (452 aa).

11 helical membrane-spanning segments follow: residues 27–47, 67–87, 108–128, 137–157, 166–186, 194–214, 216–236, 314–334, 343–363, 381–401, and 414–434; these read FSGI…NSAL, FIGM…FFLM, AFPA…YTLF, GFGI…LLLG, VFLV…IAIF, LWLL…KMGV, SLFP…NCGI, PWSA…VAIS, GVLP…ILGL, WIDI…SIFI, and VAKI…YFFI.

It belongs to the NhaA Na(+)/H(+) (TC 2.A.33) antiporter family.

The protein resides in the cell inner membrane. It carries out the reaction Na(+)(in) + 2 H(+)(out) = Na(+)(out) + 2 H(+)(in). Its function is as follows. Na(+)/H(+) antiporter that extrudes sodium in exchange for external protons. This Wolinella succinogenes (strain ATCC 29543 / DSM 1740 / CCUG 13145 / JCM 31913 / LMG 7466 / NCTC 11488 / FDC 602W) (Vibrio succinogenes) protein is Na(+)/H(+) antiporter NhaA.